We begin with the raw amino-acid sequence, 475 residues long: Putative aldehyde dehydrogenase (475 aa).

NAD(+)-binding positions include 146–147 and 223–224; these read WN and GS. Glu-245 functions as the Proton acceptor in the catalytic mechanism. Leu-246 provides a ligand contact to NAD(+). Cys-279 functions as the Nucleophile in the catalytic mechanism. Residue Glu-379 participates in NAD(+) binding.

This sequence belongs to the aldehyde dehydrogenase family.

It catalyses the reaction an aldehyde + NAD(+) + H2O = a carboxylate + NADH + 2 H(+). This Staphylococcus aureus (strain USA300) protein is Putative aldehyde dehydrogenase.